We begin with the raw amino-acid sequence, 494 residues long: Guanosine-5'-triphosphate,3'-diphosphate pyrophosphatase (494 aa).

The protein belongs to the GppA/Ppx family. GppA subfamily.

The enzyme catalyses guanosine 3'-diphosphate 5'-triphosphate + H2O = guanosine 3',5'-bis(diphosphate) + phosphate + H(+). The protein operates within purine metabolism; ppGpp biosynthesis; ppGpp from GTP: step 2/2. Catalyzes the conversion of pppGpp to ppGpp. Guanosine pentaphosphate (pppGpp) is a cytoplasmic signaling molecule which together with ppGpp controls the 'stringent response', an adaptive process that allows bacteria to respond to amino acid starvation, resulting in the coordinated regulation of numerous cellular activities. The polypeptide is Guanosine-5'-triphosphate,3'-diphosphate pyrophosphatase (Escherichia coli O157:H7).